Reading from the N-terminus, the 360-residue chain is 3-isopropylmalate dehydrogenase (360 aa).

Residue 76–89 (GPKWDKLDMAIRPE) coordinates NAD(+). Residues arginine 96, arginine 106, arginine 134, and aspartate 224 each contribute to the substrate site. Mg(2+) is bound by residues aspartate 224, aspartate 248, and aspartate 252. 282–294 (GSAPDIAGQNMAN) serves as a coordination point for NAD(+).

It belongs to the isocitrate and isopropylmalate dehydrogenases family. LeuB type 1 subfamily. Homodimer. Requires Mg(2+) as cofactor. It depends on Mn(2+) as a cofactor.

The protein localises to the cytoplasm. It catalyses the reaction (2R,3S)-3-isopropylmalate + NAD(+) = 4-methyl-2-oxopentanoate + CO2 + NADH. It participates in amino-acid biosynthesis; L-leucine biosynthesis; L-leucine from 3-methyl-2-oxobutanoate: step 3/4. In terms of biological role, catalyzes the oxidation of 3-carboxy-2-hydroxy-4-methylpentanoate (3-isopropylmalate) to 3-carboxy-4-methyl-2-oxopentanoate. The product decarboxylates to 4-methyl-2 oxopentanoate. The sequence is that of 3-isopropylmalate dehydrogenase from Hahella chejuensis (strain KCTC 2396).